The chain runs to 530 residues: Membrane-bound lytic murein transglycosylase F (530 aa).

The signal sequence occupies residues 1–27; sequence MTPFAYKLPIRALWLGLLSLLLVGCQI. The interval 28-279 is non-LT domain; the sequence is DSEPKSELEK…SLEEKYIGHI (252 aa). An LT domain region spans residues 280–530; the sequence is GAFDYVDTRA…SAKPSTESKN (251 aa). Residue E324 is part of the active site. The tract at residues 505–530 is disordered; it reads ALESESLENSESSAEPSAKPSTESKN. Over residues 513 to 530 the composition is skewed to low complexity; it reads NSESSAEPSAKPSTESKN.

In the N-terminal section; belongs to the bacterial solute-binding protein 3 family. It in the C-terminal section; belongs to the transglycosylase Slt family.

It localises to the cell outer membrane. The enzyme catalyses Exolytic cleavage of the (1-&gt;4)-beta-glycosidic linkage between N-acetylmuramic acid (MurNAc) and N-acetylglucosamine (GlcNAc) residues in peptidoglycan, from either the reducing or the non-reducing ends of the peptidoglycan chains, with concomitant formation of a 1,6-anhydrobond in the MurNAc residue.. In terms of biological role, murein-degrading enzyme that degrades murein glycan strands and insoluble, high-molecular weight murein sacculi, with the concomitant formation of a 1,6-anhydromuramoyl product. Lytic transglycosylases (LTs) play an integral role in the metabolism of the peptidoglycan (PG) sacculus. Their lytic action creates space within the PG sacculus to allow for its expansion as well as for the insertion of various structures such as secretion systems and flagella. The polypeptide is Membrane-bound lytic murein transglycosylase F (Vibrio cholerae serotype O1 (strain ATCC 39541 / Classical Ogawa 395 / O395)).